A 1140-amino-acid chain; its full sequence is uncharacterized protein (1140 aa).

2 consecutive transmembrane segments (helical) span residues 8–28 and 1098–1118; these read FLLFGFALGSFGWFVASSAFT and IAITFTGSAALLSTIIASGVV.

It to M.pneumoniae MPN_375 (in the N-terminal section), M.pneumoniae MPN_374 (in the central section) and M.pneumoniae MPN_373 (in the C-terminal section).

It localises to the cell membrane. This is an uncharacterized protein from Mycoplasma pneumoniae (strain ATCC 29342 / M129 / Subtype 1) (Mycoplasmoides pneumoniae).